We begin with the raw amino-acid sequence, 374 residues long: Chaperone protein DnaJ (374 aa).

Positions 5–70 constitute a J domain; the sequence is DYYEVLGVNR…RKRASYDQFG (66 aa). Residues 133–210 form a CR-type zinc finger; the sequence is GLSRTIKVPT…CHGQGRQQQT (78 aa). Zn(2+) is bound by residues Cys-146, Cys-149, Cys-162, Cys-165, Cys-184, Cys-187, Cys-198, and Cys-201. CXXCXGXG motif repeat units follow at residues 146–153, 162–169, 184–191, and 198–205; these read CKTCNGSG, CPRCNGSG, CSVCRGRG, and CTDCHGQG.

It belongs to the DnaJ family. Homodimer. The cofactor is Zn(2+).

The protein resides in the cytoplasm. In terms of biological role, participates actively in the response to hyperosmotic and heat shock by preventing the aggregation of stress-denatured proteins and by disaggregating proteins, also in an autonomous, DnaK-independent fashion. Unfolded proteins bind initially to DnaJ; upon interaction with the DnaJ-bound protein, DnaK hydrolyzes its bound ATP, resulting in the formation of a stable complex. GrpE releases ADP from DnaK; ATP binding to DnaK triggers the release of the substrate protein, thus completing the reaction cycle. Several rounds of ATP-dependent interactions between DnaJ, DnaK and GrpE are required for fully efficient folding. Also involved, together with DnaK and GrpE, in the DNA replication of plasmids through activation of initiation proteins. This chain is Chaperone protein DnaJ, found in Coxiella burnetii (strain CbuG_Q212) (Coxiella burnetii (strain Q212)).